The sequence spans 207 residues: Small ribosomal subunit protein uS4 (207 aa).

The segment at 31 to 55 is disordered; sequence KCKLDSKPGQHGRTSGARTSDYGTQ. Residues 42–53 are compositionally biased toward polar residues; it reads GRTSGARTSDYG. The region spanning 97–160 is the S4 RNA-binding domain; that stretch reads SRLDNVVYRM…KKQARIVEAL (64 aa).

Belongs to the universal ribosomal protein uS4 family. Part of the 30S ribosomal subunit. Contacts protein S5. The interaction surface between S4 and S5 is involved in control of translational fidelity.

Its function is as follows. One of the primary rRNA binding proteins, it binds directly to 16S rRNA where it nucleates assembly of the body of the 30S subunit. With S5 and S12 plays an important role in translational accuracy. This is Small ribosomal subunit protein uS4 from Burkholderia ambifaria (strain ATCC BAA-244 / DSM 16087 / CCUG 44356 / LMG 19182 / AMMD) (Burkholderia cepacia (strain AMMD)).